Reading from the N-terminus, the 234-residue chain is Peptidyl-prolyl cis-trans isomerase, rhodopsin-specific isozyme (234 aa).

The N-terminal stretch at 1 to 19 is a signal peptide; that stretch reads MNILKILILLELIYTCVSG. Residues 29–187 enclose the PPIase cyclophilin-type domain; the sequence is YMDVKHQKKP…DPVIIVNCGE (159 aa). Asn-67 is a glycosylation site (N-linked (GlcNAc...) asparagine). A helical membrane pass occupies residues 202–222; sequence ILGWIKAAGLPFCSSFIVLMI.

Belongs to the cyclophilin-type PPIase family. In terms of tissue distribution, expressed specifically in photoreceptor cells.

Its subcellular location is the membrane. It carries out the reaction [protein]-peptidylproline (omega=180) = [protein]-peptidylproline (omega=0). In terms of biological role, PPIases accelerate the folding of proteins. It catalyzes the cis-trans isomerization of proline imidic peptide bonds in oligopeptides. Acts on the folding of rhodopsin RH1 and RH2 (but not RH3) and is required for visual transduction. The polypeptide is Peptidyl-prolyl cis-trans isomerase, rhodopsin-specific isozyme (NINAA) (Calliphora vicina (Blue blowfly)).